The sequence spans 362 residues: Molybdenum import ATP-binding protein ModC (362 aa).

The ABC transporter domain maps to Met1–Asp236. Position 36–43 (Gly36–Thr43) interacts with ATP. The region spanning Asp297–Gly362 is the Mop domain.

This sequence belongs to the ABC transporter superfamily. Molybdate importer (TC 3.A.1.8) family. The complex is composed of two ATP-binding proteins (ModC), two transmembrane proteins (ModB) and a solute-binding protein (ModA).

The protein resides in the cell inner membrane. The catalysed reaction is molybdate(out) + ATP + H2O = molybdate(in) + ADP + phosphate + H(+). Functionally, part of the ABC transporter complex ModABC involved in molybdenum import. Responsible for energy coupling to the transport system. This is Molybdenum import ATP-binding protein ModC from Saccharophagus degradans (strain 2-40 / ATCC 43961 / DSM 17024).